Consider the following 312-residue polypeptide: Ribonuclease Z (312 aa).

Residues His-63, His-65, Asp-67, His-68, His-140, Asp-211, and His-269 each coordinate Zn(2+). Residue Asp-67 is the Proton acceptor of the active site.

The protein belongs to the RNase Z family. As to quaternary structure, homodimer. Zn(2+) serves as cofactor.

The catalysed reaction is Endonucleolytic cleavage of RNA, removing extra 3' nucleotides from tRNA precursor, generating 3' termini of tRNAs. A 3'-hydroxy group is left at the tRNA terminus and a 5'-phosphoryl group is left at the trailer molecule.. Its function is as follows. Zinc phosphodiesterase, which displays some tRNA 3'-processing endonuclease activity. Probably involved in tRNA maturation, by removing a 3'-trailer from precursor tRNA. This chain is Ribonuclease Z, found in Anoxybacillus flavithermus (strain DSM 21510 / WK1).